The primary structure comprises 39 residues: Photosystem II reaction center protein X (39 aa).

A helical membrane pass occupies residues 10–30 (SSLVWAAVIVVIPAAVALVLI).

Belongs to the PsbX family. Type 1 subfamily. PSII is composed of 1 copy each of membrane proteins PsbA, PsbB, PsbC, PsbD, PsbE, PsbF, PsbH, PsbI, PsbJ, PsbK, PsbL, PsbM, PsbT, PsbX, PsbY, Psb30/Ycf12, peripheral proteins PsbO, CyanoQ (PsbQ), PsbU, PsbV and a large number of cofactors. It forms dimeric complexes.

Its subcellular location is the cellular thylakoid membrane. Involved in the binding and/or turnover of quinones at the Q(B) site of photosystem II (PSII). PSII is a light-driven water plastoquinone oxidoreductase, using light energy to abstract electrons from H(2)O, generating a proton gradient subsequently used for ATP formation. This is Photosystem II reaction center protein X from Prochlorococcus marinus (strain MIT 9303).